The sequence spans 258 residues: MLDIDVSNLSIGRQQVLTSLNLSLEAHQFVAIVGENGAGKSTFLNMLAGELPYNGSIYLNGRELNSWDALKLAPIRAVMEQHQAAPEGLSVKELVAMGRYWSQESDADAEQRATQWLSRFDLTPMGERGIETLSGGEQQRAHLARCLCQLDKDLPGEQLLLLDEPTSALDVYHQHAVLHEIKSFSQKGNLVLSVMHDLNLASLYADQVIVLGNNCIQHVDSPESVFREDILERTYRTPVHVSSHPSFLKPMIFTEPRH.

In terms of domain architecture, ABC transporter spans 1–238 (MLDIDVSNLS…DILERTYRTP (238 aa)). 34–41 (GENGAGKS) contacts ATP.

Belongs to the ABC transporter superfamily. Heme (hemin) importer (TC 3.A.1.14.5) family. In terms of assembly, the complex is composed of two ATP-binding proteins (HmuV), two transmembrane proteins (HmuU) and a solute-binding protein (HmuT).

It is found in the cell inner membrane. Part of the ABC transporter complex HmuTUV involved in hemin import. Responsible for energy coupling to the transport system. The protein is Hemin import ATP-binding protein HmuV of Idiomarina loihiensis (strain ATCC BAA-735 / DSM 15497 / L2-TR).